The primary structure comprises 251 residues: Aspartate/glutamate leucyltransferase (251 aa).

The protein belongs to the R-transferase family. Bpt subfamily.

Its subcellular location is the cytoplasm. The enzyme catalyses N-terminal L-glutamyl-[protein] + L-leucyl-tRNA(Leu) = N-terminal L-leucyl-L-glutamyl-[protein] + tRNA(Leu) + H(+). The catalysed reaction is N-terminal L-aspartyl-[protein] + L-leucyl-tRNA(Leu) = N-terminal L-leucyl-L-aspartyl-[protein] + tRNA(Leu) + H(+). Functionally, functions in the N-end rule pathway of protein degradation where it conjugates Leu from its aminoacyl-tRNA to the N-termini of proteins containing an N-terminal aspartate or glutamate. This Xanthomonas euvesicatoria pv. vesicatoria (strain 85-10) (Xanthomonas campestris pv. vesicatoria) protein is Aspartate/glutamate leucyltransferase.